We begin with the raw amino-acid sequence, 349 residues long: MDVLIVDDSPVIRQLLRHIIEEGGMRVIGEASNGVEALRCIARRRPDVITMDIHMPVMDGLEASRRIMEEYPTPIVVVTASYSLGDAVTAMQVLEAGAITVTPKPQGPSHPDFERDVESLLRTIRLISEVKVVRRFRRRQGKREEVQPPPPVNHEHEGFQPGVIAIGASTGGPVALKELLQGISRKTPCPVLVVQHISPGFLTSFCEWLNQVSALPVSIGEYGERAERGRVYLAPDGCHMEVDRSCRISLVNGNRDETLCPSVSRLFSSVAKNFGRNAVVVLLSGMGRDGAAEMAELHRLGALTIAQDPATVVVNGMPGEAVKLGAARHVLSPPRIAALLNELPVQSCV.

In terms of domain architecture, Response regulatory spans 2 to 119 (DVLIVDDSPV…HPDFERDVES (118 aa)). Residue aspartate 52 is modified to 4-aspartylphosphate. The CheB-type methylesterase domain maps to 157 to 340 (EGFQPGVIAI…LSPPRIAALL (184 aa)). Active-site residues include serine 169, histidine 196, and aspartate 289.

It belongs to the CheB family. Phosphorylated by CheA. Phosphorylation of the N-terminal regulatory domain activates the methylesterase activity.

It localises to the cytoplasm. It catalyses the reaction [protein]-L-glutamate 5-O-methyl ester + H2O = L-glutamyl-[protein] + methanol + H(+). It carries out the reaction L-glutaminyl-[protein] + H2O = L-glutamyl-[protein] + NH4(+). Involved in chemotaxis. Part of a chemotaxis signal transduction system that modulates chemotaxis in response to various stimuli. Catalyzes the demethylation of specific methylglutamate residues introduced into the chemoreceptors (methyl-accepting chemotaxis proteins or MCP) by CheR. Also mediates the irreversible deamidation of specific glutamine residues to glutamic acid. This Hahella chejuensis (strain KCTC 2396) protein is Protein-glutamate methylesterase/protein-glutamine glutaminase 3.